The sequence spans 377 residues: Iris (377 aa).

Residues asparagine 11 and asparagine 226 are each glycosylated (N-linked (GlcNAc...) asparagine).

This sequence belongs to the serpin family. Female saliva (at protein level). Female salivary gland (at protein level).

Its subcellular location is the secreted. Serine protease inhibitor with anticoagulant and immunosuppressive properties that can modulate blood feeding of ticks on vertebrate species. Strongly inhibits human leukocyte elastase (ELANE) and porcine pancreatic elastase. Moderately inhibits human tPA/tissue-type plasminogen activator (PLAT), coagulation factor Xa (F10), thrombin (F2) and trypsin. Does not inhibit human plasmin (PLG). Inhibits platelet aggregation. Inhibits the intrinsic pathway of blood coagulation in the host. Inhibits fibrinolysis in the host. Inhibits proliferation of mouse splenocytes. Decreases the number of IFN-gamma (IFNG)-producing human peripheral blood mononuclear cells (PBMCs) after stimulation with phytohemagglutinin A (PHA). Increases the number of IL10-producing human PBMCs after stimulation with lipopolysaccharides (LPS) with no significant effect on IL10 production. Inhibits production of IFNG, IL6, TNF-alpha (TNF) and CXCL8 by human PBMCs. Binds to monocyte/macrophage subpopulation of the host PBMCs. Increases both survival rate and survival time in mice with LPS-induced endotoxemic shock. This chain is Iris, found in Ixodes ricinus (Common tick).